The primary structure comprises 406 residues: Phosphopentomutase (406 aa).

Mn(2+) is bound by residues Asp10, Asp305, His310, Asp346, His347, and His358.

The protein belongs to the phosphopentomutase family. Requires Mn(2+) as cofactor.

It is found in the cytoplasm. It catalyses the reaction 2-deoxy-alpha-D-ribose 1-phosphate = 2-deoxy-D-ribose 5-phosphate. The catalysed reaction is alpha-D-ribose 1-phosphate = D-ribose 5-phosphate. It functions in the pathway carbohydrate degradation; 2-deoxy-D-ribose 1-phosphate degradation; D-glyceraldehyde 3-phosphate and acetaldehyde from 2-deoxy-alpha-D-ribose 1-phosphate: step 1/2. Its function is as follows. Isomerase that catalyzes the conversion of deoxy-ribose 1-phosphate (dRib-1-P) and ribose 1-phosphate (Rib-1-P) to deoxy-ribose 5-phosphate (dRib-5-P) and ribose 5-phosphate (Rib-5-P), respectively. This Rhizobium johnstonii (strain DSM 114642 / LMG 32736 / 3841) (Rhizobium leguminosarum bv. viciae) protein is Phosphopentomutase.